Reading from the N-terminus, the 520-residue chain is Ribonuclease Y (520 aa).

Residues 4–24 (VSGILLVLIGLLAGVGLGVLL) traverse the membrane as a helical segment. The KH domain occupies 210 to 270 (TVSVVNLPNE…VRREVARVSL (61 aa)). The HD domain maps to 336 to 429 (VLQHSREVAF…VQAADALSGA (94 aa)).

This sequence belongs to the RNase Y family.

Its subcellular location is the cell membrane. Functionally, endoribonuclease that initiates mRNA decay. This Syntrophobacter fumaroxidans (strain DSM 10017 / MPOB) protein is Ribonuclease Y.